We begin with the raw amino-acid sequence, 457 residues long: Charged multivesicular body protein 7 (457 aa).

Coiled coils occupy residues Gln-234–Glu-266 and Thr-331–Val-382. Disordered stretches follow at residues Ser-381 to Lys-401 and Leu-435 to Gln-457.

The protein belongs to the SNF7 family.

The protein resides in the cytoplasm. Its subcellular location is the nucleus envelope. Its function is as follows. ESCRT-III-like protein required to recruit the ESCRT-III complex to the nuclear envelope during late anaphase. Together with SPAST, the ESCRT-III complex promotes nuclear envelope sealing and mitotic spindle disassembly during late anaphase. Plays a role in the endosomal sorting pathway. This Danio rerio (Zebrafish) protein is Charged multivesicular body protein 7 (chmp7).